A 105-amino-acid polypeptide reads, in one-letter code: uncharacterized protein (105 aa).

Residues 80–105 (TGGPTSSTCTRRSDLATGRGSDRRPD) are disordered.

This is an uncharacterized protein from Micromonospora rosea.